Reading from the N-terminus, the 299-residue chain is 4-hydroxy-tetrahydrodipicolinate synthase (299 aa).

Residue Thr44 coordinates pyruvate. The active-site Proton donor/acceptor is the Tyr133. Lys162 (schiff-base intermediate with substrate) is an active-site residue. Pyruvate is bound at residue Ile204.

This sequence belongs to the DapA family. As to quaternary structure, homotetramer; dimer of dimers.

The protein localises to the cytoplasm. The enzyme catalyses L-aspartate 4-semialdehyde + pyruvate = (2S,4S)-4-hydroxy-2,3,4,5-tetrahydrodipicolinate + H2O + H(+). It participates in amino-acid biosynthesis; L-lysine biosynthesis via DAP pathway; (S)-tetrahydrodipicolinate from L-aspartate: step 3/4. Catalyzes the condensation of (S)-aspartate-beta-semialdehyde [(S)-ASA] and pyruvate to 4-hydroxy-tetrahydrodipicolinate (HTPA). The protein is 4-hydroxy-tetrahydrodipicolinate synthase of Thermus thermophilus (strain ATCC BAA-163 / DSM 7039 / HB27).